The primary structure comprises 622 residues: Chaperone protein HscA homolog (622 aa).

This sequence belongs to the heat shock protein 70 family.

Chaperone involved in the maturation of iron-sulfur cluster-containing proteins. Has a low intrinsic ATPase activity which is markedly stimulated by HscB. The sequence is that of Chaperone protein HscA homolog from Burkholderia ambifaria (strain MC40-6).